The sequence spans 219 residues: N-(5'-phosphoribosyl)anthranilate isomerase (219 aa).

The protein belongs to the TrpF family.

It carries out the reaction N-(5-phospho-beta-D-ribosyl)anthranilate = 1-(2-carboxyphenylamino)-1-deoxy-D-ribulose 5-phosphate. It participates in amino-acid biosynthesis; L-tryptophan biosynthesis; L-tryptophan from chorismate: step 3/5. In Mesorhizobium japonicum (strain LMG 29417 / CECT 9101 / MAFF 303099) (Mesorhizobium loti (strain MAFF 303099)), this protein is N-(5'-phosphoribosyl)anthranilate isomerase.